Here is a 394-residue protein sequence, read N- to C-terminus: Alcohol dehydrogenase-like 3 (394 aa).

Residues Cys48, Thr50, His71, Cys101, Cys104, Cys107, Cys115, and Cys188 each contribute to the Zn(2+) site. An alcohol contacts are provided by Thr50 and His71. Thr50 contacts NAD(+). NAD(+) is bound by residues 213-218, Asp237, Lys242, Thr283, Val306, 306-308, Phe333, and Arg383; these read GLGSVG and VGI.

Belongs to the zinc-containing alcohol dehydrogenase family. Class-III subfamily. Homodimer. Zn(2+) serves as cofactor.

The protein localises to the cytoplasm. It catalyses the reaction a primary alcohol + NAD(+) = an aldehyde + NADH + H(+). It carries out the reaction a secondary alcohol + NAD(+) = a ketone + NADH + H(+). The sequence is that of Alcohol dehydrogenase-like 3 from Arabidopsis thaliana (Mouse-ear cress).